We begin with the raw amino-acid sequence, 391 residues long: Elongation factor Tu (391 aa).

One can recognise a tr-type G domain in the interval 10–201 (KPHVNIGTIG…AVDDYIPTPA (192 aa)). Positions 19-26 (GHVDHGKT) are G1. 19-26 (GHVDHGKT) is a binding site for GTP. Thr26 lines the Mg(2+) pocket. The tract at residues 55-59 (GITIS) is G2. Positions 76-79 (DCPG) are G3. GTP contacts are provided by residues 76–80 (DCPGH) and 131–134 (NKVD). Residues 131–134 (NKVD) are G4. The segment at 169 to 171 (SAL) is G5.

This sequence belongs to the TRAFAC class translation factor GTPase superfamily. Classic translation factor GTPase family. EF-Tu/EF-1A subfamily. Monomer.

The protein localises to the cytoplasm. It catalyses the reaction GTP + H2O = GDP + phosphate + H(+). In terms of biological role, GTP hydrolase that promotes the GTP-dependent binding of aminoacyl-tRNA to the A-site of ribosomes during protein biosynthesis. In Dinoroseobacter shibae (strain DSM 16493 / NCIMB 14021 / DFL 12), this protein is Elongation factor Tu.